A 353-amino-acid chain; its full sequence is Photosystem II D2 protein (353 aa).

An N-acetylthreonine modification is found at T2. A Phosphothreonine modification is found at T2. The helical transmembrane segment at 41-61 (CAYFALGGWFTGTTFVTSWYT) threads the bilayer. Residue H118 coordinates chlorophyll a. Residues 125 to 141 (GFMLRQFELARSVQLRP) traverse the membrane as a helical segment. Pheophytin a contacts are provided by Q130 and N143. A helical membrane pass occupies residues 153 to 166 (VFVSVFLIYPLGQS). Residue H198 coordinates chlorophyll a. The chain crosses the membrane as a helical span at residues 208–228 (AALLCAIHGATVENTLFEDGD). Residues H215 and F262 each coordinate a plastoquinone. H215 is a Fe cation binding site. Residue H269 participates in Fe cation binding. Residues 279-295 (GLWMSALGVVGLALNLR) traverse the membrane as a helical segment.

Belongs to the reaction center PufL/M/PsbA/D family. In terms of assembly, PSII is composed of 1 copy each of membrane proteins PsbA, PsbB, PsbC, PsbD, PsbE, PsbF, PsbH, PsbI, PsbJ, PsbK, PsbL, PsbM, PsbT, PsbX, PsbY, PsbZ, Psb30/Ycf12, at least 3 peripheral proteins of the oxygen-evolving complex and a large number of cofactors. It forms dimeric complexes. Requires The D1/D2 heterodimer binds P680, chlorophylls that are the primary electron donor of PSII, and subsequent electron acceptors. It shares a non-heme iron and each subunit binds pheophytin, quinone, additional chlorophylls, carotenoids and lipids. There is also a Cl(-1) ion associated with D1 and D2, which is required for oxygen evolution. The PSII complex binds additional chlorophylls, carotenoids and specific lipids. as cofactor.

It is found in the plastid. The protein resides in the chloroplast thylakoid membrane. The enzyme catalyses 2 a plastoquinone + 4 hnu + 2 H2O = 2 a plastoquinol + O2. Functionally, photosystem II (PSII) is a light-driven water:plastoquinone oxidoreductase that uses light energy to abstract electrons from H(2)O, generating O(2) and a proton gradient subsequently used for ATP formation. It consists of a core antenna complex that captures photons, and an electron transfer chain that converts photonic excitation into a charge separation. The D1/D2 (PsbA/PsbD) reaction center heterodimer binds P680, the primary electron donor of PSII as well as several subsequent electron acceptors. D2 is needed for assembly of a stable PSII complex. The chain is Photosystem II D2 protein from Lemna minor (Common duckweed).